The primary structure comprises 801 residues: MKDQLLVPLRRRPWTCQKCLQRLQLPRHQTRRSFETAASPFPRPLDSLPADYARTKTVDDDTLRRVFDSQQFWREFSQQRAAQPKPTGLVQNQYLTSPDGFRTFANVSLQKCQAIVSKVLAASTLEEYRTMARDLDRLSDLLCRVIDLSDFIRVIHPDPQVQEAATQAYALMFEYMNVLNTTTGLNDQLKKAAANPEVTSQWSDEEKIVAQILIKDFSNSAIHMPPHERQRFVNLSNDISQLGSSFVNGAEPAKSHVSVATNNLRGLDPILVQQIKRWNRTAAVPTTGMIPRLALRSVHDENVRREVYLASRTSSKRQLHRLEELLLKRAELAKLSGYESFAHMTLSDKMAKSPEAVSNFLTALVESNRKLVREELSQLQVMKGAPLQPWDHAYYVHQRVLQYSQARRSRELSAVPEFFSLGTVMQGLSRLFDRLYGVRLVPQEPAPGETWNPDVRRLDVVDEAGRHIAVIYCDLFSRPNKHPNPAHFTLRCSREISAEEVAECASLDQSSHPNDGMATAVDPVTQTLRQLPTIALVCDFPEPGTNGGGRPSLLSEHSVRTLFHEMGHAVHSILGQTRLQSISGTRCATDFAELPSVLMEHFATAPSVLALYARHWRTDEPLSEGMIRSMERDRTAHGSIYGAVENEAQILMALVDQAYHSRPADGGRIDSTALYQQVSQQHSSLPEPADATTPPTSWQGFFGHLYGYGATYYSYIFDRAIANKLWVDVFGAGRHAVDRAAGERYKNEVLRWGGGRSGWECVAGALGSANESNADGRLVEGGDQAMREVGRWGLGRDGVSG.

A mitochondrion-targeting transit peptide spans 1–41 (MKDQLLVPLRRRPWTCQKCLQRLQLPRHQTRRSFETAASPF). Zn(2+) is bound at residue His-564. Glu-565 is a catalytic residue. Positions 568 and 571 each coordinate Zn(2+).

Belongs to the peptidase M3 family. Zn(2+) is required as a cofactor.

It is found in the mitochondrion matrix. It catalyses the reaction Release of an N-terminal octapeptide as second stage of processing of some proteins imported into the mitochondrion.. Its function is as follows. Cleaves proteins, imported into the mitochondrion, to their mature size. While most mitochondrial precursor proteins are processed to the mature form in one step by mitochondrial processing peptidase (MPP), the sequential cleavage by MIP of an octapeptide after initial processing by MPP is a required step for a subgroup of nuclear-encoded precursor proteins destined for the matrix or the inner membrane. In Aspergillus fumigatus (strain CBS 144.89 / FGSC A1163 / CEA10) (Neosartorya fumigata), this protein is Mitochondrial intermediate peptidase (oct1).